We begin with the raw amino-acid sequence, 293 residues long: DOMON domain-containing protein FRRS1L (293 aa).

The signal sequence occupies residues 1–28 (MARPPRQHPGVWASLLLLLLTGPAACAA). The interval 29–61 (SPADDGAGPGGRGPRGRARGDTGADEAVPRHDS) is disordered. A compositionally biased stretch (basic and acidic residues) spans 46-61 (ARGDTGADEAVPRHDS). Residues 119-234 (CDYFLSYRMI…WYYLFAWGPA (116 aa)) form the DOMON domain. A helical transmembrane segment spans residues 271–291 (TFSSPFCLLLIVALTFYLLMG).

Component of the outer core of AMPAR complex. AMPAR complex consists of an inner core made of 4 pore-forming GluA/GRIA proteins (GRIA1, GRIA2, GRIA3 and GRIA4) and 4 major auxiliary subunits arranged in a twofold symmetry. One of the two pairs of distinct binding sites is occupied either by CNIH2, CNIH3 or CACNG2, CACNG3. The other harbors CACNG2, CACNG3, CACNG4, CACNG8 or GSG1L. This inner core of AMPAR complex is complemented by outer core constituents binding directly to the GluA/GRIA proteins at sites distinct from the interaction sites of the inner core constituents. Outer core constituents include at least PRRT1, PRRT2, CKAMP44/SHISA9, FRRS1L and NRN1. The proteins of the inner and outer core serve as a platform for other, more peripherally associated AMPAR constituents. Alone or in combination, these auxiliary subunits control the gating and pharmacology of the AMPAR complex and profoundly impact their biogenesis and protein processing. As to expression, expressed in adult and fetal brain. Very weak expression in medulla, spinal cord and in adult ovary.

The protein resides in the cell membrane. It is found in the synapse. Functionally, important modulator of glutamate signaling pathway. The sequence is that of DOMON domain-containing protein FRRS1L (FRRS1L) from Homo sapiens (Human).